Reading from the N-terminus, the 148-residue chain is UPF0179 protein Mboo_1959 (148 aa).

Belongs to the UPF0179 family.

This chain is UPF0179 protein Mboo_1959, found in Methanoregula boonei (strain DSM 21154 / JCM 14090 / 6A8).